An 850-amino-acid chain; its full sequence is Bifunctional levopimaradiene synthase, chloroplastic (850 aa).

The N-terminal 52 residues, 1–52 (MALPSSSLSSQIHTGATTQCIPHFHGSLNAGTSAGKRRSLYLRWGKGPSKIV), are a transit peptide targeting the chloroplast. Position 250 (Lys250) interacts with substrate. Asp383 and Asp385 together coordinate Mg(2+). Residues 383-386 (DIDD) carry the DXDD motif motif. Lys470 contacts substrate. The Mg(2+) site is built by Asp602, Asp606, Asn746, Thr750, and Glu754. The DDXXD motif signature appears at 602–606 (DDLYD).

This sequence belongs to the terpene synthase family. Tpsd subfamily. The cofactor is Mg(2+).

The protein resides in the plastid. Its subcellular location is the chloroplast. The catalysed reaction is (2E,6E,10E)-geranylgeranyl diphosphate = (+)-copalyl diphosphate. The enzyme catalyses (+)-copalyl diphosphate = abieta-7,13-diene + diphosphate. It catalyses the reaction (+)-copalyl diphosphate = abieta-8(14),12-diene + diphosphate. It carries out the reaction (+)-copalyl diphosphate = neoabietadiene + diphosphate. It functions in the pathway terpene metabolism; oleoresin biosynthesis. In terms of biological role, involved in defensive oleoresin formation in conifers in response to insect attack or other injury. Involved in diterpene (C20) olefins biosynthesis. Bifunctional enzyme that catalyzes two sequential cyclizations of geranylgeranyl diphosphate (GGPP) to levopimaradiene. Levopimaradiene is the major products of the enzyme with abietadiene and neoabietadiene. No activity with farnesyl diphosphate (FPP) as substrate. The polypeptide is Bifunctional levopimaradiene synthase, chloroplastic (Pinus contorta (Shore pine)).